Consider the following 617-residue polypeptide: LEAF RUST 10 DISEASE-RESISTANCE LOCUS RECEPTOR-LIKE PROTEIN KINASE-like 2.4 (617 aa).

The first 26 residues, 1 to 26 (MYYLPSSCLVLFLFFSLFYHLPCASS), serve as a signal peptide directing secretion. Residues 27–243 (KQTLGWCESQ…LPTRLSSEAK (217 aa)) lie on the Extracellular side of the membrane. Asn41, Asn69, Asn86, Asn112, and Asn184 each carry an N-linked (GlcNAc...) asparagine glycan. The helical transmembrane segment at 244–264 (IATIAGVSLLPFLVLTLVVHI) threads the bilayer. The Cytoplasmic portion of the chain corresponds to 265–617 (IRKQKTSNDK…SEENSISSEI (353 aa)). One can recognise a Protein kinase domain in the interval 307 to 594 (NSFAEVVGRG…ALEVPPRPVL (288 aa)). ATP is bound by residues 313-321 (VGRGGFGIV) and Lys335. Residue Tyr380 is modified to Phosphotyrosine. Asp431 (proton acceptor) is an active-site residue. Phosphothreonine is present on residues Thr468 and Thr471.

It belongs to the protein kinase superfamily. Ser/Thr protein kinase family.

The protein resides in the membrane. The catalysed reaction is L-seryl-[protein] + ATP = O-phospho-L-seryl-[protein] + ADP + H(+). It catalyses the reaction L-threonyl-[protein] + ATP = O-phospho-L-threonyl-[protein] + ADP + H(+). This chain is LEAF RUST 10 DISEASE-RESISTANCE LOCUS RECEPTOR-LIKE PROTEIN KINASE-like 2.4, found in Arabidopsis thaliana (Mouse-ear cress).